The chain runs to 427 residues: Glutamate-1-semialdehyde 2,1-aminomutase (427 aa).

N6-(pyridoxal phosphate)lysine is present on lysine 265.

It belongs to the class-III pyridoxal-phosphate-dependent aminotransferase family. HemL subfamily. As to quaternary structure, homodimer. Requires pyridoxal 5'-phosphate as cofactor.

Its subcellular location is the cytoplasm. It carries out the reaction (S)-4-amino-5-oxopentanoate = 5-aminolevulinate. It participates in porphyrin-containing compound metabolism; protoporphyrin-IX biosynthesis; 5-aminolevulinate from L-glutamyl-tRNA(Glu): step 2/2. In Pseudomonas putida (strain W619), this protein is Glutamate-1-semialdehyde 2,1-aminomutase.